Consider the following 842-residue polypeptide: Protein P (842 aa).

The interval 1–177 (MPLSYQHFRR…FCGSPYSWEQ (177 aa)) is terminal protein domain (TP). A spacer region spans residues 178-345 (ELHHGAFLDG…YCLTHLVNLL (168 aa)). The interval 186 to 273 (DGPSRMGEES…AKNIASRSAS (88 aa)) is disordered. The span at 223–239 (GPQSQQRPLDGSQQGRS) shows a compositional bias: polar residues. Positions 346-689 (EDWGPCTEHG…YLNLYPVARQ (344 aa)) are polymerase/reverse transcriptase domain (RT). Residues 356 to 599 (KHHIRIPRTP…YSLNFMGYVI (244 aa)) enclose the Reverse transcriptase domain. Mg(2+) contacts are provided by aspartate 428, aspartate 550, and aspartate 551.

Belongs to the hepadnaviridae P protein family.

It carries out the reaction DNA(n) + a 2'-deoxyribonucleoside 5'-triphosphate = DNA(n+1) + diphosphate. The catalysed reaction is Endonucleolytic cleavage to 5'-phosphomonoester.. With respect to regulation, activated by host HSP70 and HSP40 in vitro to be able to bind the epsilon loop of the pgRNA. Because deletion of the RNase H region renders the protein partly chaperone-independent, the chaperones may be needed indirectly to relieve occlusion of the RNA-binding site by this domain. Inhibited by several reverse-transcriptase inhibitors: Lamivudine, Adefovir and Entecavir. In terms of biological role, multifunctional enzyme that converts the viral RNA genome into dsDNA in viral cytoplasmic capsids. This enzyme displays a DNA polymerase activity that can copy either DNA or RNA templates, and a ribonuclease H (RNase H) activity that cleaves the RNA strand of RNA-DNA heteroduplexes in a partially processive 3'- to 5'-endonucleasic mode. Neo-synthesized pregenomic RNA (pgRNA) are encapsidated together with the P protein, and reverse-transcribed inside the nucleocapsid. Initiation of reverse-transcription occurs first by binding the epsilon loop on the pgRNA genome, and is initiated by protein priming, thereby the 5'-end of (-)DNA is covalently linked to P protein. Partial (+)DNA is synthesized from the (-)DNA template and generates the relaxed circular DNA (RC-DNA) genome. After budding and infection, the RC-DNA migrates in the nucleus, and is converted into a plasmid-like covalently closed circular DNA (cccDNA). The activity of P protein does not seem to be necessary for cccDNA generation, and is presumably released from (+)DNA by host nuclear DNA repair machinery. The protein is Protein P of Homo sapiens (Human).